The following is a 1563-amino-acid chain: DNA-directed RNA polymerase subunit beta' (1563 aa).

4 residues coordinate Zn(2+): Cys-61, Cys-63, Cys-76, and Cys-79. The Mg(2+) site is built by Asp-588, Asp-590, and Asp-592. Cys-925, Cys-999, Cys-1006, and Cys-1009 together coordinate Zn(2+).

It belongs to the RNA polymerase beta' chain family. As to quaternary structure, the RNAP catalytic core consists of 2 alpha, 1 beta, 1 beta' and 1 omega subunit. When a sigma factor is associated with the core the holoenzyme is formed, which can initiate transcription. Mg(2+) is required as a cofactor. It depends on Zn(2+) as a cofactor.

The enzyme catalyses RNA(n) + a ribonucleoside 5'-triphosphate = RNA(n+1) + diphosphate. DNA-dependent RNA polymerase catalyzes the transcription of DNA into RNA using the four ribonucleoside triphosphates as substrates. The sequence is that of DNA-directed RNA polymerase subunit beta' from Hydrogenobaculum sp. (strain Y04AAS1).